Reading from the N-terminus, the 322-residue chain is Nucleoprotein (322 aa).

The RNA site is built by tyrosine 43, tyrosine 46, valine 76, arginine 122, lysine 240, and serine 269.

The protein belongs to the tenuiviruses nucleocapsid protein family.

It localises to the virion. The protein resides in the host cytoplasm. Its function is as follows. Encapsidates the genome, protecting it from nucleases. The encapsidated genomic RNA is termed the nucleocapsid (NC), and serves as template for viral transcription and replication. This chain is Nucleoprotein, found in Avena sativa (Oat).